The following is a 211-amino-acid chain: Probable GTP-binding protein EngB (211 aa).

An EngB-type G domain is found at 21 to 205; the sequence is LMATIVFVGR…KNRIYEIIRE (185 aa). GTP contacts are provided by residues 29–36, 54–58, 71–74, 151–154, and 184–186; these read GRSNVGKS, GVTRK, DMPG, NKLD, and ISA. The Mg(2+) site is built by S36 and T56.

This sequence belongs to the TRAFAC class TrmE-Era-EngA-EngB-Septin-like GTPase superfamily. EngB GTPase family. Mg(2+) serves as cofactor.

Functionally, necessary for normal cell division and for the maintenance of normal septation. The protein is Probable GTP-binding protein EngB of Pyrococcus abyssi (strain GE5 / Orsay).